A 282-amino-acid chain; its full sequence is Pantothenate synthetase (282 aa).

Residue 30 to 37 coordinates ATP; sequence MGALHAGH. Catalysis depends on histidine 37, which acts as the Proton donor. A (R)-pantoate-binding site is contributed by glutamine 61. Glutamine 61 is a binding site for beta-alanine. 147–150 lines the ATP pocket; it reads GEKD. (R)-pantoate is bound at residue glutamine 153. ATP contacts are provided by residues valine 176 and 184–187; that span reads LSSR.

The protein belongs to the pantothenate synthetase family. In terms of assembly, homodimer.

The protein localises to the cytoplasm. The enzyme catalyses (R)-pantoate + beta-alanine + ATP = (R)-pantothenate + AMP + diphosphate + H(+). It functions in the pathway cofactor biosynthesis; (R)-pantothenate biosynthesis; (R)-pantothenate from (R)-pantoate and beta-alanine: step 1/1. In terms of biological role, catalyzes the condensation of pantoate with beta-alanine in an ATP-dependent reaction via a pantoyl-adenylate intermediate. The sequence is that of Pantothenate synthetase from Bacteroides thetaiotaomicron (strain ATCC 29148 / DSM 2079 / JCM 5827 / CCUG 10774 / NCTC 10582 / VPI-5482 / E50).